The following is a 170-amino-acid chain: Photosystem I assembly protein Ycf3 (170 aa).

TPR repeat units follow at residues 35 to 68, 72 to 105, and 120 to 153; these read AFTHYRDGMSAQSEGEYAEALQNYYEAMRLEIDP, SYILYNIGLIHTSNGEHAKALEYYFQALERNSSL, and GEQAIEEGDPETCEVWFDQAADYWKKAISLAPSN.

It belongs to the Ycf3 family.

The protein resides in the plastid. It is found in the chloroplast thylakoid membrane. Functionally, essential for the assembly of the photosystem I (PSI) complex. May act as a chaperone-like factor to guide the assembly of the PSI subunits. This Anthoceros angustus (Hornwort) protein is Photosystem I assembly protein Ycf3.